The primary structure comprises 504 residues: D-alanine--D-alanyl carrier protein ligase (504 aa).

152–153 lines the ATP pocket; sequence TS. D197 contributes to the D-alanine binding site. 292–297 is an ATP binding site; it reads NTYGPT. V301 serves as a coordination point for D-alanine. ATP-binding positions include D383, 394 to 397, and K492; that span reads YNGR. Residue K492 participates in D-alanine binding.

The protein belongs to the ATP-dependent AMP-binding enzyme family. DltA subfamily.

The protein resides in the cytoplasm. The enzyme catalyses holo-[D-alanyl-carrier protein] + D-alanine + ATP = D-alanyl-[D-alanyl-carrier protein] + AMP + diphosphate. The protein operates within cell wall biogenesis; lipoteichoic acid biosynthesis. Its function is as follows. Catalyzes the first step in the D-alanylation of lipoteichoic acid (LTA), the activation of D-alanine and its transfer onto the D-alanyl carrier protein (Dcp) DltC. In an ATP-dependent two-step reaction, forms a high energy D-alanyl-AMP intermediate, followed by transfer of the D-alanyl residue as a thiol ester to the phosphopantheinyl prosthetic group of the Dcp. D-alanylation of LTA plays an important role in modulating the properties of the cell wall in Gram-positive bacteria, influencing the net charge of the cell wall. In Bacillus cytotoxicus (strain DSM 22905 / CIP 110041 / 391-98 / NVH 391-98), this protein is D-alanine--D-alanyl carrier protein ligase.